Reading from the N-terminus, the 412-residue chain is Protein Mb3436c (412 aa).

K227 is modified (N6-(pyridoxal phosphate)lysine).

It belongs to the DegT/DnrJ/EryC1 family.

The protein is Protein Mb3436c of Mycobacterium bovis (strain ATCC BAA-935 / AF2122/97).